A 411-amino-acid chain; its full sequence is Adherens junction-associated protein 1 (411 aa).

Residues 1–43 (MWIQQLLGLSSMSIRWPGRPLGSHAWILIAMFQLAVDLPACEA) form the signal peptide. The Extracellular portion of the chain corresponds to 44–282 (LGPGPEFWLL…GEASGLAVHQ (239 aa)). Disordered regions lie at residues 89–108 (IHGQ…RDQA), 115–197 (AGLA…SNTF), and 239–268 (SLDP…VTQP). Residues 115-146 (AGLAKPPAAAKSSPSLASSSSSSSSAVAGGAP) are compositionally biased toward low complexity. A compositionally biased stretch (polar residues) spans 166 to 178 (SFDSRGSRPTTET). Over residues 247-263 (PGGVSTTEPSTSPSNNG) the composition is skewed to low complexity. The helical transmembrane segment at 283 to 303 (IITITVSLIMVIAALITTLVL) threads the bilayer. Positions 303–411 (LKNCCAQSGN…VSEKWFEISC (109 aa)) are targeting signals. Residues 304–411 (KNCCAQSGNT…VSEKWFEISC (108 aa)) are Cytoplasmic-facing. A disordered region spans residues 311–330 (GNTRRNSHQRKTNQQEESCQ).

Forms a complex with CDH1 and CTNNB1; interacts directly with CTNNB1. Interacts with AP1M2. Interacts with isoform 2 of BSG/CD147. In terms of processing, thr-237 and Ser-239 may be phosphorylated; however as this position is probably extracellular, the in vivo relevance is not proven. As to expression, expressed in uterus and pancreas (at protein level).

Its subcellular location is the basolateral cell membrane. It localises to the apical cell membrane. It is found in the cell junction. The protein localises to the adherens junction. In terms of biological role, plays a role in cell adhesion and cell migration. The sequence is that of Adherens junction-associated protein 1 (AJAP1) from Homo sapiens (Human).